Reading from the N-terminus, the 53-residue chain is uncharacterized protein (53 aa).

The segment covering 1–10 (MHILTRSSKN) has biased composition (polar residues). The disordered stretch occupies residues 1-25 (MHILTRSSKNAFPRSRSRQDIHISS).

This is an uncharacterized protein from Saccharomyces cerevisiae (strain ATCC 204508 / S288c) (Baker's yeast).